A 1220-amino-acid chain; its full sequence is Plasma membrane calcium-transporting ATPase 3 (1220 aa).

Over residues 1–20 (MGDMANSSIEFHPKPQQQRD) the composition is skewed to polar residues. Positions 1–23 (MGDMANSSIEFHPKPQQQRDVPQ) are disordered. The Cytoplasmic segment spans residues 1–97 (MGDMANSSIE…NFIPPKQPKT (97 aa)). Position 8 is a phosphoserine (Ser8). Residues 98–118 (FLQLVWEALQDVTLIILEVAA) traverse the membrane as a helical segment. Topologically, residues 119–155 (IVSLGLSFYAPPGEESEACGNVSGGAEDEGEAEAGWI) are extracellular. The helical transmembrane segment at 156–176 (EGAAILLSVICVVLVTAFNDW) threads the bilayer. Residues 177–364 (SKEKQFRGLQ…KEKSVLQGKL (188 aa)) lie on the Cytoplasmic side of the membrane. The interval 298–355 (EEEKKDKKGKQQDGAMESSQTKAKKQDGAVAMEMQPLKSAEGGEMEEREKKKANAPKK) is disordered. Composition is skewed to basic and acidic residues over residues 299–308 (EEKKDKKGKQ) and 342–355 (MEEREKKKANAPKK). Residues 365 to 384 (TKLAVQIGKAGLVMSAITVI) form a helical membrane-spanning segment. The Extracellular segment spans residues 385 to 417 (ILVLYFVIETFVVEGRTWLAECTPVYVQYFVKF). The chain crosses the membrane as a helical span at residues 418–435 (FIIGVTVLVVAVPEGLPL). Over 436–849 (AVTISLAYSV…MWGRNVYDSI (414 aa)) the chain is Cytoplasmic. The active-site 4-aspartylphosphate intermediate is the Asp473. Positions 794 and 798 each coordinate Mg(2+). A helical membrane pass occupies residues 850–869 (SKFLQFQLTVNVVAVIVAFT). Residues 870-879 (GACITQDSPL) are Extracellular-facing. Residues 880–900 (KAVQMLWVNLIMDTFASLALA) traverse the membrane as a helical segment. At 901 to 920 (TEPPTESLLLRKPYGRDKPL) the chain is on the cytoplasmic side. Residues 921–943 (ISRTMMKNILGHAVYQLAIIFTL) form a helical membrane-spanning segment. The Extracellular portion of the chain corresponds to 944–961 (LFVGELFFDIDSGRNAPL). Residues 962–983 (HSPPSEHYTIIFNTFVMMQLFN) form a helical membrane-spanning segment. The Cytoplasmic segment spans residues 984–1002 (EINARKIHGERNVFDGIFS). Residues 1003–1024 (NPIFCTIVLGTFGIQIVIVQFG) traverse the membrane as a helical segment. The Extracellular portion of the chain corresponds to 1025-1034 (GKPFSCSPLS). The chain crosses the membrane as a helical span at residues 1035–1056 (TEQWLWCLFVGVGELVWGQVIA). At 1057–1220 (TIPTSQLKCL…SPLHSVETSL (164 aa)) the chain is on the cytoplasmic side. The residue at position 1079 (Thr1079) is a Phosphothreonine. The segment at 1097 to 1114 (LRRGQILWFRGLNRIQTQ) is calmodulin-binding subdomain A. A Phosphothreonine; by PKC modification is found at Thr1113. The calmodulin-binding subdomain B stretch occupies residues 1115 to 1124 (IRVVKAFRSS). The segment at 1166-1186 (ENEERLRAPPPPSPNQNNNAI) is disordered.

This sequence belongs to the cation transport ATPase (P-type) (TC 3.A.3) family. Type IIB subfamily. Interacts with PDZD11. Interacts (via N-terminus) with YWHAE. As to expression, highly expressed in the cerebellum. Expressed in adrenal glands.

The protein localises to the cell membrane. It localises to the presynaptic cell membrane. It carries out the reaction Ca(2+)(in) + ATP + H2O = Ca(2+)(out) + ADP + phosphate + H(+). Down-regulated by YWHAE. Functionally, ATP-driven Ca(2+) ion pump involved in the maintenance of basal intracellular Ca(2+) levels at the presynaptic terminals. Uses ATP as an energy source to transport cytosolic Ca(2+) ions across the plasma membrane to the extracellular compartment. May counter-transport protons, but the mechanism and the stoichiometry of this Ca(2+)/H(+) exchange remains to be established. This chain is Plasma membrane calcium-transporting ATPase 3, found in Homo sapiens (Human).